Consider the following 339-residue polypeptide: Probable geranylgeranyl transferase type-2 subunit beta (339 aa).

6 PFTB repeats span residues 24-65 (IDKH…YLLK), 72-113 (KNEV…IQYD), 120-161 (INSV…SLLK), 168-209 (CEKA…SILN), 216-257 (IDKL…SAID), and 264-306 (NDKL…SLMG). Residues 194–196 (HAG) and 236–248 (RPEK…YSWW) contribute to the geranylgeranyl diphosphate site. Positions 242, 244, and 294 each coordinate Zn(2+).

Belongs to the protein prenyltransferase subunit beta family. In terms of assembly, heterodimer of an alpha and a beta subunit. Zn(2+) is required as a cofactor.

The enzyme catalyses geranylgeranyl diphosphate + L-cysteinyl-[protein] = S-geranylgeranyl-L-cysteinyl-[protein] + diphosphate. Its function is as follows. Catalyzes the transfer of a geranyl-geranyl moiety from geranyl-geranyl pyrophosphate to both cysteines in Rab proteins with an -XXCC, -XCXC and -CCXX C-terminal. This is Probable geranylgeranyl transferase type-2 subunit beta (rabggtb) from Dictyostelium discoideum (Social amoeba).